A 219-amino-acid polypeptide reads, in one-letter code: Large ribosomal subunit protein bL25 (219 aa).

The interval 176-219 (VTVVPPTDEPSEEEVEAMEGESATEEPEVVDEDKEDDEEENKED) is disordered. Acidic residues predominate over residues 184-219 (EPSEEEVEAMEGESATEEPEVVDEDKEDDEEENKED).

Belongs to the bacterial ribosomal protein bL25 family. CTC subfamily. In terms of assembly, part of the 50S ribosomal subunit; part of the 5S rRNA/L5/L18/L25 subcomplex. Contacts the 5S rRNA. Binds to the 5S rRNA independently of L5 and L18.

This is one of the proteins that binds to the 5S RNA in the ribosome where it forms part of the central protuberance. The chain is Large ribosomal subunit protein bL25 from Staphylococcus epidermidis (strain ATCC 12228 / FDA PCI 1200).